A 539-amino-acid chain; its full sequence is Glucans biosynthesis protein D (539 aa).

A signal peptide (tat-type signal) is located at residues 1-31; it reads MHRRNLLKASMALAAYTGLSASGLLAARAWA.

The protein belongs to the OpgD/OpgG family. Post-translationally, predicted to be exported by the Tat system. The position of the signal peptide cleavage has not been experimentally proven.

The protein localises to the periplasm. Its pathway is glycan metabolism; osmoregulated periplasmic glucan (OPG) biosynthesis. In terms of biological role, probably involved in the control of the structural glucose backbone of osmoregulated periplasmic glucans (OPGs). The sequence is that of Glucans biosynthesis protein D from Pseudomonas fluorescens (strain ATCC BAA-477 / NRRL B-23932 / Pf-5).